Here is a 373-residue protein sequence, read N- to C-terminus: tRNA-specific 2-thiouridylase MnmA (373 aa).

ATP-binding positions include 12 to 19 (GMSGGVDS) and Met38. The segment at 98–100 (NPD) is interaction with target base in tRNA. Cys103 functions as the Nucleophile in the catalytic mechanism. An intrachain disulfide couples Cys103 to Cys200. An ATP-binding site is contributed by Gly127. The interaction with tRNA stretch occupies residues 150–152 (KDQ). The active-site Cysteine persulfide intermediate is Cys200. The interval 312-313 (RY) is interaction with tRNA.

It belongs to the MnmA/TRMU family.

The protein resides in the cytoplasm. It carries out the reaction S-sulfanyl-L-cysteinyl-[protein] + uridine(34) in tRNA + AH2 + ATP = 2-thiouridine(34) in tRNA + L-cysteinyl-[protein] + A + AMP + diphosphate + H(+). Catalyzes the 2-thiolation of uridine at the wobble position (U34) of tRNA, leading to the formation of s(2)U34. The polypeptide is tRNA-specific 2-thiouridylase MnmA (Streptococcus pyogenes serotype M28 (strain MGAS6180)).